The sequence spans 315 residues: tRNA dimethylallyltransferase (315 aa).

18 to 25 serves as a coordination point for ATP; it reads GPTASGKT. 20-25 lines the substrate pocket; it reads TASGKT. Interaction with substrate tRNA stretches follow at residues 43–46, 167–171, and 248–253; these read DSAL, QRLSR, and RCVGYR.

This sequence belongs to the IPP transferase family. Monomer. Mg(2+) is required as a cofactor.

It catalyses the reaction adenosine(37) in tRNA + dimethylallyl diphosphate = N(6)-dimethylallyladenosine(37) in tRNA + diphosphate. Its function is as follows. Catalyzes the transfer of a dimethylallyl group onto the adenine at position 37 in tRNAs that read codons beginning with uridine, leading to the formation of N6-(dimethylallyl)adenosine (i(6)A). The protein is tRNA dimethylallyltransferase of Pseudoalteromonas atlantica (strain T6c / ATCC BAA-1087).